Reading from the N-terminus, the 439-residue chain is L-tryptophan decarboxylase (439 aa).

The protein belongs to the phosphatidylserine decarboxylase family.

The catalysed reaction is L-tryptophan + H(+) = tryptamine + CO2. Its pathway is secondary metabolite biosynthesis. L-tryptophan decarboxylase; part of the gene cluster that mediates the biosynthesis of psilocybin, a psychotropic tryptamine-derived natural product. The first step in the pathway is the decarboxylation of L-tryptophan to tryptamine by the decarboxylase psiD. PsiD does not decarboxylate phenylalanine, tyrosine, or 5-hydroxy- L -tryptophan (5-HTP). 4-hydroxy-L-tryptophan is accepted as substrate by psiD as well. The cytochrome P450 monooxygenase psiH then converts tryptamine to 4-hydroxytryptamine. The kinase psiK catalyzes the 4-O-phosphorylation step by converting 4-hydroxytryptamine into norbaeocystin. The methyltransferase psiM then catalyzes iterative methyl transfer to the amino group of norbaeocystin to yield psilocybin via a monomethylated intermediate, baeocystin. 4-hydroxy-6-methyl-l-tryptophancan also be converted the decarboxylase PsiD, kinase PsiK, and methyltransferase PsiM into respectively 6-methyl-norbaeocystin, 6-methylbaeocystin, and 6-methylpsilocybin. The protein is L-tryptophan decarboxylase of Psilocybe cyanescens.